We begin with the raw amino-acid sequence, 137 residues long: uncharacterized protein (137 aa).

It belongs to the ycf72 family.

Its subcellular location is the plastid. The protein resides in the chloroplast. This is an uncharacterized protein from Saccharum hybrid (Sugarcane).